The sequence spans 31 residues: Photosystem II reaction center protein M (31 aa).

The helical transmembrane segment at 5–25 threads the bilayer; the sequence is ILAFIATALLILVPTAFLLII.

This sequence belongs to the PsbM family. PSII is composed of 1 copy each of membrane proteins PsbA, PsbB, PsbC, PsbD, PsbE, PsbF, PsbH, PsbI, PsbJ, PsbK, PsbL, PsbM, PsbT, PsbX, PsbY, PsbZ, Psb30/Ycf12, at least 3 peripheral proteins of the oxygen-evolving complex and a large number of cofactors. It forms dimeric complexes.

It is found in the plastid membrane. In terms of biological role, one of the components of the core complex of photosystem II (PSII). PSII is a light-driven water:plastoquinone oxidoreductase that uses light energy to abstract electrons from H(2)O, generating O(2) and a proton gradient subsequently used for ATP formation. It consists of a core antenna complex that captures photons, and an electron transfer chain that converts photonic excitation into a charge separation. This subunit is found at the monomer-monomer interface. This chain is Photosystem II reaction center protein M, found in Cuscuta reflexa (Southern Asian dodder).